The chain runs to 671 residues: DNA ligase (671 aa).

Residues 32–36, 81–82, and glutamate 113 contribute to the NAD(+) site; these read DAEYD and SL. The active-site N6-AMP-lysine intermediate is lysine 115. Residues arginine 136, glutamate 173, lysine 290, and lysine 314 each contribute to the NAD(+) site. Residues cysteine 408, cysteine 411, cysteine 426, and cysteine 432 each contribute to the Zn(2+) site. The BRCT domain occupies 593–671; the sequence is EIDSPFAGKT…EAEMIRLLGA (79 aa).

This sequence belongs to the NAD-dependent DNA ligase family. LigA subfamily. Mg(2+) serves as cofactor. It depends on Mn(2+) as a cofactor.

It carries out the reaction NAD(+) + (deoxyribonucleotide)n-3'-hydroxyl + 5'-phospho-(deoxyribonucleotide)m = (deoxyribonucleotide)n+m + AMP + beta-nicotinamide D-nucleotide.. DNA ligase that catalyzes the formation of phosphodiester linkages between 5'-phosphoryl and 3'-hydroxyl groups in double-stranded DNA using NAD as a coenzyme and as the energy source for the reaction. It is essential for DNA replication and repair of damaged DNA. The sequence is that of DNA ligase from Salmonella gallinarum (strain 287/91 / NCTC 13346).